Consider the following 274-residue polypeptide: Large ribosomal subunit protein uL2 (274 aa).

Disordered regions lie at residues 37–60 and 224–252; these read QHQK…GHKH and AMNP…WGNL. A compositionally biased stretch (basic residues) spans 50-60; sequence TTRHKGGGHKH. Positions 229–246 are enriched in basic and acidic residues; it reads DHPHGGGEGRTGEGRHAV.

It belongs to the universal ribosomal protein uL2 family. Part of the 50S ribosomal subunit. Forms a bridge to the 30S subunit in the 70S ribosome.

Its function is as follows. One of the primary rRNA binding proteins. Required for association of the 30S and 50S subunits to form the 70S ribosome, for tRNA binding and peptide bond formation. It has been suggested to have peptidyltransferase activity; this is somewhat controversial. Makes several contacts with the 16S rRNA in the 70S ribosome. This is Large ribosomal subunit protein uL2 from Paracidovorax citrulli (strain AAC00-1) (Acidovorax citrulli).